The primary structure comprises 245 residues: MKVSIFITCVADVFYPEVGKDVVEILEDLGCEVDFPKTQTCCGQPAYNSGYVKETKTAAKHMIEAFASSEYVVAPSGSCAMMVHEFSSLFSESEADWKKKATELGNKTYEFTQFLVEVLGKEDLGAELHKKATVHTSCHMSRLMGIKEPPQKLLKCVKGLEVVSLPHNYDCCGFGGTFSVKMPEISEQMVEEKVKHIMETGAELLIGMDCSCLMNIKGRLTRNGYPIDVKHIAQVLNEDRKQGGI.

Belongs to the LutA/YkgE family.

Functionally, is involved in L-lactate degradation and allows cells to grow with lactate as the sole carbon source. The chain is Lactate utilization protein A 1 from Bacillus mycoides (strain KBAB4) (Bacillus weihenstephanensis).